The primary structure comprises 254 residues: Aspartate/glutamate leucyltransferase (254 aa).

Belongs to the R-transferase family. Bpt subfamily.

Its subcellular location is the cytoplasm. It catalyses the reaction N-terminal L-glutamyl-[protein] + L-leucyl-tRNA(Leu) = N-terminal L-leucyl-L-glutamyl-[protein] + tRNA(Leu) + H(+). It carries out the reaction N-terminal L-aspartyl-[protein] + L-leucyl-tRNA(Leu) = N-terminal L-leucyl-L-aspartyl-[protein] + tRNA(Leu) + H(+). In terms of biological role, functions in the N-end rule pathway of protein degradation where it conjugates Leu from its aminoacyl-tRNA to the N-termini of proteins containing an N-terminal aspartate or glutamate. The protein is Aspartate/glutamate leucyltransferase of Xylella fastidiosa (strain M12).